A 534-amino-acid chain; its full sequence is Beta-glucosidase 32 (534 aa).

Residues 1-22 (MAIKLIALVITICVASWDSAQG) form the signal peptide. Gln-51 lines the a beta-D-glucoside pocket. An N-linked (GlcNAc...) asparagine glycan is attached at Asn-68. A beta-D-glucoside-binding positions include His-154 and 199 to 200 (NE). The active-site Proton donor is Glu-200. A disulfide bridge connects residues Cys-219 and Cys-227. Residue Tyr-344 participates in a beta-D-glucoside binding. An N-linked (GlcNAc...) asparagine glycan is attached at Asn-374. Glu-417 contacts a beta-D-glucoside. Glu-417 acts as the Nucleophile in catalysis. Asn-425 is a glycosylation site (N-linked (GlcNAc...) asparagine). A beta-D-glucoside is bound by residues Trp-467, 474 to 475 (EW), and Phe-483.

It belongs to the glycosyl hydrolase 1 family.

The enzyme catalyses Hydrolysis of terminal, non-reducing beta-D-glucosyl residues with release of beta-D-glucose.. This Arabidopsis thaliana (Mouse-ear cress) protein is Beta-glucosidase 32.